The chain runs to 661 residues: UvrABC system protein B (661 aa).

The Helicase ATP-binding domain occupies 28-414 (DGVNEGKRHQ…HTDEMVEQII (387 aa)). Residue 41-48 (GATGTGKT) participates in ATP binding. Residues 94–117 (YYDYYQPEAYVPSTDTFIEKDASI) carry the Beta-hairpin motif. The Helicase C-terminal domain maps to 432-598 (QIDDLLSEIQ…TINKKIHDVI (167 aa)). Residues 603 to 624 (ESDETNQQQQTELPKKMTKKER) are disordered. The region spanning 625-660 (QKTIENIEKEMKKAAKDLDFEKATELRDMLFELKAE) is the UVR domain.

Belongs to the UvrB family. Forms a heterotetramer with UvrA during the search for lesions. Interacts with UvrC in an incision complex.

It is found in the cytoplasm. Its function is as follows. The UvrABC repair system catalyzes the recognition and processing of DNA lesions. A damage recognition complex composed of 2 UvrA and 2 UvrB subunits scans DNA for abnormalities. Upon binding of the UvrA(2)B(2) complex to a putative damaged site, the DNA wraps around one UvrB monomer. DNA wrap is dependent on ATP binding by UvrB and probably causes local melting of the DNA helix, facilitating insertion of UvrB beta-hairpin between the DNA strands. Then UvrB probes one DNA strand for the presence of a lesion. If a lesion is found the UvrA subunits dissociate and the UvrB-DNA preincision complex is formed. This complex is subsequently bound by UvrC and the second UvrB is released. If no lesion is found, the DNA wraps around the other UvrB subunit that will check the other stand for damage. The polypeptide is UvrABC system protein B (Staphylococcus epidermidis (strain ATCC 35984 / DSM 28319 / BCRC 17069 / CCUG 31568 / BM 3577 / RP62A)).